The chain runs to 318 residues: Oxygen-evolving enhancer protein 1, chloroplastic (318 aa).

Positions M1–A18 are cleaved as a signal peptide. A helical transmembrane segment spans residues A45 to I65.

It belongs to the PsbO family.

It is found in the plastid. The protein localises to the chloroplast thylakoid membrane. In terms of biological role, stabilizes the manganese cluster which is the primary site of water splitting. This Chattonella marina var. antiqua (Red tide flagellate) protein is Oxygen-evolving enhancer protein 1, chloroplastic.